Here is a 67-residue protein sequence, read N- to C-terminus: Probable Sec-independent protein translocase protein TatE (67 aa).

The helical transmembrane segment at 4-21 (ISITKLLVIAALVVLLFG) threads the bilayer. A disordered region spans residues 44 to 67 (NDDDTGAKTPAASEAPAERLSHKE).

It belongs to the TatA/E family. TatE subfamily.

It is found in the cell inner membrane. Part of the twin-arginine translocation (Tat) system that transports large folded proteins containing a characteristic twin-arginine motif in their signal peptide across membranes. TatE shares overlapping functions with TatA. This Cronobacter sakazakii (strain ATCC BAA-894) (Enterobacter sakazakii) protein is Probable Sec-independent protein translocase protein TatE.